A 98-amino-acid chain; its full sequence is Class II hydrophobin 2 (98 aa).

An N-terminal signal peptide occupies residues 1–21 (MFFSRISTIVSMTALFASALA). Cystine bridges form between Cys34–Cys80, Cys41–Cys71, Cys42–Cys54, and Cys81–Cys92.

Belongs to the cerato-ulmin hydrophobin family.

It localises to the secreted. The protein resides in the cell wall. In terms of biological role, aerial growth, conidiation, and dispersal of filamentous fungi in the environment rely upon a capability of their secreting small amphipathic proteins called hydrophobins (HPBs) with low sequence identity. Class I can self-assemble into an outermost layer of rodlet bundles on aerial cell surfaces, conferring cellular hydrophobicity that supports fungal growth, development and dispersal; whereas Class II form highly ordered films at water-air interfaces through intermolecular interactions but contribute nothing to the rodlet structure. In Botryotinia fuckeliana, hydrophobins are not involved in conferring surface hydrophobicity to conidia and aerial hyphae and their function in sclerotia and fruiting bodies remains to be investigated. This Botryotinia fuckeliana (strain B05.10) (Noble rot fungus) protein is Class II hydrophobin 2.